Here is a 95-residue protein sequence, read N- to C-terminus: MTMFVESINDVLFLVDFFTIILPALTAIGIAFLLRECRAGEQWKSKRTDEHQTVFHINRTDFLIIIYHRITTWIRKVFRMNSPVNDEEDAGSLLL.

A helical membrane pass occupies residues 12-32; the sequence is LFLVDFFTIILPALTAIGIAF. Residues 86–89 are crucial for elongation arrest; it reads DEED.

It localises to the cell membrane. Its function is as follows. Sensor protein that up-regulates translation of the secondary membrane protein insertase (MisCB/YqjG) when activity of the primary membrane protein insertase (MisCA/SpoIIIJ) is limited. Acts as a ribosome-nascent chain complex. When the primary membrane protein insertase activity or level is reduced, the membrane insertion of MifM is impaired, which induces arrest of MifM translation and unfolding of the mRNA hairpin. Unfolding leads to translation of the downstream gene, which encodes the secondary membrane protein insertase MisCB/YqjG. Translation arrest of MifM is mediated by interaction of its C-terminal domain with the ribosomal polypeptide exit tunnel. Undergoes multisite stalling, which may allow a sufficient duration of ribosomal stalling and consequently sufficient levels of MisCB/YqjG. In Bacillus subtilis (strain 168), this protein is Membrane protein insertion and folding monitor (mifM).